A 177-amino-acid chain; its full sequence is ATP synthase subunit delta (177 aa).

The protein belongs to the ATPase delta chain family. F-type ATPases have 2 components, F(1) - the catalytic core - and F(0) - the membrane proton channel. F(1) has five subunits: alpha(3), beta(3), gamma(1), delta(1), epsilon(1). F(0) has three main subunits: a(1), b(2) and c(10-14). The alpha and beta chains form an alternating ring which encloses part of the gamma chain. F(1) is attached to F(0) by a central stalk formed by the gamma and epsilon chains, while a peripheral stalk is formed by the delta and b chains.

It is found in the cell inner membrane. In terms of biological role, f(1)F(0) ATP synthase produces ATP from ADP in the presence of a proton or sodium gradient. F-type ATPases consist of two structural domains, F(1) containing the extramembraneous catalytic core and F(0) containing the membrane proton channel, linked together by a central stalk and a peripheral stalk. During catalysis, ATP synthesis in the catalytic domain of F(1) is coupled via a rotary mechanism of the central stalk subunits to proton translocation. Its function is as follows. This protein is part of the stalk that links CF(0) to CF(1). It either transmits conformational changes from CF(0) to CF(1) or is implicated in proton conduction. The chain is ATP synthase subunit delta from Shewanella sp. (strain ANA-3).